We begin with the raw amino-acid sequence, 59 residues long: Large ribosomal subunit protein uL30 (59 aa).

This sequence belongs to the universal ribosomal protein uL30 family. As to quaternary structure, part of the 50S ribosomal subunit.

This chain is Large ribosomal subunit protein uL30, found in Clostridium botulinum (strain ATCC 19397 / Type A).